The chain runs to 470 residues: MNGAQFELLREYLGRPPTLNQYFIFKPQARAIQRIMRFDTDVFFALIKKNKKRFFARIGGSASEINARVLSYFVKQRATTKVGRILSIIELQSVLVNSYTEIMGVLTLPAPPVYNSVVRLHYCSMERLAEEVLWSYNVAFRSGKVMGRHCVSNLVVHVNKLMSEYLRRHNRTAICYGSYSLHLLNSRIEYGDIDILQTNARLFLINLAFLIYFITGRNVLLLKVPYLKSYIVMQDEEGRHIIDSFNIRQGTMQNVPKVLVDNIYIIDPVVQLMNTLKMLSQIDRLEDLGERMAKMRLRLATLLEYARYHHCVSFGGGARLRLHMRLDAGARIVLVDTRCYGLGYRECRCYLDEARLLQDISKLNADAAVVDFEAVSNSVFLIHQGIMYTYFSNTVLLRSEDAIHDVSERAVCAHITLYHLLVGCNYQELLADLLNSLVSREKCPVVGVVARDKKVGRHGVIDIEKDVITH.

Residues aspartate 192 and aspartate 194 contribute to the active site.

It belongs to the poxviridae poly(A) polymerase catalytic subunit family. Heterodimer of a large (catalytic) subunit and a small (regulatory) subunit.

The catalysed reaction is RNA(n) + ATP = RNA(n)-3'-adenine ribonucleotide + diphosphate. Its function is as follows. Polymerase that creates the 3'-poly(A) tail of mRNA's. This is Poly(A) polymerase catalytic subunit (PAPL) from Molluscum contagiosum virus subtype 1 (MOCV).